The following is a 51-amino-acid chain: Large ribosomal subunit protein eL39 (51 aa).

Over residues 1 to 19 the composition is skewed to basic residues; it reads MSHNMKGQKKRLAKAHKQN. A disordered region spans residues 1 to 23; it reads MSHNMKGQKKRLAKAHKQNSRVP.

It belongs to the eukaryotic ribosomal protein eL39 family.

This chain is Large ribosomal subunit protein eL39, found in Methanosarcina mazei (strain ATCC BAA-159 / DSM 3647 / Goe1 / Go1 / JCM 11833 / OCM 88) (Methanosarcina frisia).